The primary structure comprises 472 residues: MKSILDGLADTTFRTITTDLLYVGSNDIQYEDIKGDMASKLGYFPQKFPLTSFRGSPFQEKMTAGDNPQLVPADQVNITEFYNKSLSSFKENEENIQCGENFMDIECFMVLNPSQQLAIAVLSLTLGTFTVLENLLVLCVILHSRSLRCRPSYHFIGSLAVADLLGSVIFVYSFIDFHVFHRKDSRNVFLFKLGGVTASFTASVGSLFLTAIDRYISIHRPLAYKRIVTRPKAVVAFCLMWTIAIVIAVLPLLGWNCEKLQSVCSDIFPHIDETYLMFWIGVTSVLLLFIVYAYMYILWKAHSHAVRMIQRGTQKSIIIHTSEDGKVQVTRPDQARMDIRLAKTLVLILVVLIICWGPLLAIMVYDVFGKMNKLIKTVFAFCSMLCLLNSTVNPIIYALRSKDLRHAFRSMFPSCEGTAQPLDNSMGDSDCLHKHANNAASVHRAAESCIKSTVKIAKVTMSVSTDTSAEAL.

The Extracellular segment spans residues 1 to 116; that stretch reads MKSILDGLAD…CFMVLNPSQQ (116 aa). Residues 2-23 form a required for mitochondrial localization region; sequence KSILDGLADTTFRTITTDLLYV. N77 and N83 each carry an N-linked (GlcNAc...) asparagine glycan. The chain crosses the membrane as a helical span at residues 117-142; the sequence is LAIAVLSLTLGTFTVLENLLVLCVIL. Residues 143-154 lie on the Cytoplasmic side of the membrane; sequence HSRSLRCRPSYH. The chain crosses the membrane as a helical span at residues 155-175; the sequence is FIGSLAVADLLGSVIFVYSFI. Residues 176–187 are Extracellular-facing; it reads DFHVFHRKDSRN. A helical membrane pass occupies residues 188 to 212; the sequence is VFLFKLGGVTASFTASVGSLFLTAI. Topologically, residues 213-232 are cytoplasmic; it reads DRYISIHRPLAYKRIVTRPK. A helical transmembrane segment spans residues 233-255; sequence AVVAFCLMWTIAIVIAVLPLLGW. Residues 256-273 lie on the Extracellular side of the membrane; it reads NCEKLQSVCSDIFPHIDE. Residues 274–299 form a helical membrane-spanning segment; it reads TYLMFWIGVTSVLLLFIVYAYMYILW. Residues 300-344 are Cytoplasmic-facing; that stretch reads KAHSHAVRMIQRGTQKSIIIHTSEDGKVQVTRPDQARMDIRLAKT. Residues 345–365 traverse the membrane as a helical segment; that stretch reads LVLILVVLIICWGPLLAIMVY. Over 366-377 the chain is Extracellular; the sequence is DVFGKMNKLIKT. The chain crosses the membrane as a helical span at residues 378 to 399; the sequence is VFAFCSMLCLLNSTVNPIIYAL. Residues 400-472 are Cytoplasmic-facing; sequence RSKDLRHAFR…VSTDTSAEAL (73 aa). A lipid anchor (S-palmitoyl cysteine) is attached at C415. Residues S425 and S429 each carry the phosphoserine modification.

The protein belongs to the G-protein coupled receptor 1 family. In terms of assembly, interacts (via C-terminus) with CNRIP1; this interaction attenuates constitutive, but not agonist-dependent, inhibition of voltage-gated Ca(2+) channels in neurons. Associates with G protein alpha subunits, including G(i) alpha-1/GNAI1, G(i) alpha-3/GNAI3 and G(o)-alpha/GNAO1; palmitoylation is important for interaction with GNAI3 and GNAO1. Post-translationally, palmitoylation at Cys-415 is important for recruitment at plasma membrane and lipid rafts and association with G protein alpha subunits. In terms of tissue distribution, widely expressed, with highest levels in fetal and adult brain. Expression levels of isoform 2 and isoform 3 are much lower than those of isoform 1.

It is found in the cell membrane. Its subcellular location is the membrane raft. The protein resides in the mitochondrion outer membrane. It localises to the cell projection. The protein localises to the axon. It is found in the presynapse. Its activity is regulated as follows. Hemopressin, a peptide derived from hemoglobin subunit alpha (HBA1 and/or HBA2), acts as an antagonist peptide: hemopressin-binding efficiently blocks cannabinoid receptor CNR1 and subsequent signaling. In terms of biological role, G-protein coupled receptor for endogenous cannabinoids (eCBs), including N-arachidonoylethanolamide (also called anandamide or AEA) and 2-arachidonoylglycerol (2-AG), as well as phytocannabinoids, such as delta(9)-tetrahydrocannabinol (THC). Mediates many cannabinoid-induced effects, acting, among others, on food intake, memory loss, gastrointestinal motility, catalepsy, ambulatory activity, anxiety, chronic pain. Signaling typically involves reduction in cyclic AMP. In the hypothalamus, may have a dual effect on mitochondrial respiration depending upon the agonist dose and possibly upon the cell type. Increases respiration at low doses, while decreases respiration at high doses. At high doses, CNR1 signal transduction involves G-protein alpha-i protein activation and subsequent inhibition of mitochondrial soluble adenylate cyclase, decrease in cyclic AMP concentration, inhibition of protein kinase A (PKA)-dependent phosphorylation of specific subunits of the mitochondrial electron transport system, including NDUFS2. In the hypothalamus, inhibits leptin-induced reactive oxygen species (ROS) formation and mediates cannabinoid-induced increase in SREBF1 and FASN gene expression. In response to cannabinoids, drives the release of orexigenic beta-endorphin, but not that of melanocyte-stimulating hormone alpha/alpha-MSH, from hypothalamic POMC neurons, hence promoting food intake. In the hippocampus, regulates cellular respiration and energy production in response to cannabinoids. Involved in cannabinoid-dependent depolarization-induced suppression of inhibition (DSI), a process in which depolarization of CA1 postsynaptic pyramidal neurons mobilizes eCBs, which retrogradely activate presynaptic CB1 receptors, transiently decreasing GABAergic inhibitory neurotransmission. Also reduces excitatory synaptic transmission. In superior cervical ganglions and cerebral vascular smooth muscle cells, inhibits voltage-gated Ca(2+) channels in a constitutive, as well as agonist-dependent manner. In cerebral vascular smooth muscle cells, cannabinoid-induced inhibition of voltage-gated Ca(2+) channels leads to vasodilation and decreased vascular tone. Induces leptin production in adipocytes and reduces LRP2-mediated leptin clearance in the kidney, hence participating in hyperleptinemia. In adipose tissue, CNR1 signaling leads to increased expression of SREBF1, ACACA and FASN genes. In the liver, activation by endocannabinoids leads to increased de novo lipogenesis and reduced fatty acid catabolism, associated with increased expression of SREBF1/SREBP-1, GCK, ACACA, ACACB and FASN genes. May also affect de novo cholesterol synthesis and HDL-cholesteryl ether uptake. Peripherally modulates energy metabolism. In high carbohydrate diet-induced obesity, may decrease the expression of mitochondrial dihydrolipoyl dehydrogenase/DLD in striated muscles, as well as that of selected glucose/ pyruvate metabolic enzymes, hence affecting energy expenditure through mitochondrial metabolism. In response to cannabinoid anandamide, elicits a pro-inflammatory response in macrophages, which involves NLRP3 inflammasome activation and IL1B and IL18 secretion. In macrophages infiltrating pancreatic islets, this process may participate in the progression of type-2 diabetes and associated loss of pancreatic beta-cells. Its function is as follows. Binds both 2-arachidonoylglycerol (2-AG) and anandamide. Functionally, only binds 2-arachidonoylglycerol (2-AG) with high affinity. Contrary to its effect on isoform 1, 2-AG behaves as an inverse agonist on isoform 2 in assays measuring GTP binding to membranes. Only binds 2-arachidonoylglycerol (2-AG) with high affinity. Contrary to its effect on isoform 1, 2-AG behaves as an inverse agonist on isoform 3 in assays measuring GTP binding to membranes. The sequence is that of Cannabinoid receptor 1 (CNR1) from Homo sapiens (Human).